The chain runs to 71 residues: Disintegrin horridistatin-2 (71 aa).

A Disintegrin domain is found at Gly-1–Gly-71. Cystine bridges form between Cys-4–Cys-19, Cys-6–Cys-14, Cys-13–Cys-36, Cys-27–Cys-33, Cys-32–Cys-57, and Cys-45–Cys-64. The Cell attachment site signature appears at Arg-49 to Asp-51.

The protein belongs to the venom metalloproteinase (M12B) family. P-II subfamily. P-IIa sub-subfamily. As to quaternary structure, monomer (disintegrin). As to expression, expressed by the venom gland.

Its subcellular location is the secreted. Inhibits ADP-induced platelet aggregation (IC(50) is 16.2 nM) by binding to alpha-IIb/beta-3 (ITGA2B/ITGB3). The polypeptide is Disintegrin horridistatin-2 (Crotalus horridus (Timber rattlesnake)).